We begin with the raw amino-acid sequence, 680 residues long: Dihydroxyacetone phosphate acyltransferase (680 aa).

Phosphoserine occurs at positions 12 and 17. The short motif at 162–167 (HRSYID) is the HXXXXD motif element. Position 643 is an N6-acetyllysine (Lys643). Residues 678-680 (AKL) carry the Microbody targeting signal motif.

It belongs to the GPAT/DAPAT family. As to quaternary structure, part of a heterotrimeric complex composed of GNPAT, AGPS and a modified form of GNPAT.

It localises to the peroxisome membrane. It catalyses the reaction dihydroxyacetone phosphate + an acyl-CoA = a 1-acylglycerone 3-phosphate + CoA. It carries out the reaction dihydroxyacetone phosphate + hexadecanoyl-CoA = 1-hexadecanoylglycerone 3-phosphate + CoA. It functions in the pathway membrane lipid metabolism; glycerophospholipid metabolism. Functionally, dihydroxyacetonephosphate acyltransferase catalyzing the first step in the biosynthesis of plasmalogens, a subset of phospholipids that differ from other glycerolipids by having an alkyl chain attached through a vinyl ether linkage at the sn-1 position of the glycerol backbone, and which unique physical properties have an impact on various aspects of cell signaling and membrane biology. This chain is Dihydroxyacetone phosphate acyltransferase, found in Homo sapiens (Human).